We begin with the raw amino-acid sequence, 434 residues long: MIDINELRADPDTYRASQTARGADAGLVDRILEADSRRRSAITDFESLRAEQNAFGKKVARAQGEEKQQLLAQVKQLAADVKAAQAAADEAQATQQQLVTQFPNLIVEGIPAGGEDDFVQLRTEGTPRDFAAEGFEPRDHLELGELLDGIDMERGAKVSGSRFYFLKRDVARLETALLMAAQDLALDNGFIPMTTPNLVRPGIMNGTGFDVEHDDEIYRVGKDDLYLVGTSEVALAGYHSDEILDLSGGPLRYAGWSSCYRREAGSAGKDTRGIIRVHQFNKLEMFVYCHPEDAAAEHERLLAWEEQMLQACGLAYRVIDTAAGDLGTSAARKFDCEAWIPTQGKYRELTSTSNCTTYQARRLNIRERLPETTDAHGKVKKGGTRAVATLNGTLATTRWLVALLETHQQADGSVTVPELLRPYLRGQEVLRPVA.

T230–E232 provides a ligand contact to L-serine. Residues R261–E263 and V277 each bind ATP. E284 provides a ligand contact to L-serine. Position 348–351 (E348–S351) interacts with ATP. Residue T393 participates in L-serine binding.

This sequence belongs to the class-II aminoacyl-tRNA synthetase family. Type-1 seryl-tRNA synthetase subfamily. Homodimer. The tRNA molecule binds across the dimer.

It localises to the cytoplasm. It carries out the reaction tRNA(Ser) + L-serine + ATP = L-seryl-tRNA(Ser) + AMP + diphosphate + H(+). The catalysed reaction is tRNA(Sec) + L-serine + ATP = L-seryl-tRNA(Sec) + AMP + diphosphate + H(+). Its pathway is aminoacyl-tRNA biosynthesis; selenocysteinyl-tRNA(Sec) biosynthesis; L-seryl-tRNA(Sec) from L-serine and tRNA(Sec): step 1/1. Catalyzes the attachment of serine to tRNA(Ser). Is also able to aminoacylate tRNA(Sec) with serine, to form the misacylated tRNA L-seryl-tRNA(Sec), which will be further converted into selenocysteinyl-tRNA(Sec). This Kocuria rhizophila (strain ATCC 9341 / DSM 348 / NBRC 103217 / DC2201) protein is Serine--tRNA ligase.